We begin with the raw amino-acid sequence, 590 residues long: Proline--tRNA ligase (590 aa).

Belongs to the class-II aminoacyl-tRNA synthetase family. ProS type 1 subfamily. In terms of assembly, homodimer.

The protein resides in the cytoplasm. The catalysed reaction is tRNA(Pro) + L-proline + ATP = L-prolyl-tRNA(Pro) + AMP + diphosphate. Its function is as follows. Catalyzes the attachment of proline to tRNA(Pro) in a two-step reaction: proline is first activated by ATP to form Pro-AMP and then transferred to the acceptor end of tRNA(Pro). As ProRS can inadvertently accommodate and process non-cognate amino acids such as alanine and cysteine, to avoid such errors it has two additional distinct editing activities against alanine. One activity is designated as 'pretransfer' editing and involves the tRNA(Pro)-independent hydrolysis of activated Ala-AMP. The other activity is designated 'posttransfer' editing and involves deacylation of mischarged Ala-tRNA(Pro). The misacylated Cys-tRNA(Pro) is not edited by ProRS. This chain is Proline--tRNA ligase, found in Leifsonia xyli subsp. xyli (strain CTCB07).